The sequence spans 947 residues: Bifunctional glutamine synthetase adenylyltransferase/adenylyl-removing enzyme (947 aa).

The adenylyl removase stretch occupies residues M1–E440. The adenylyl transferase stretch occupies residues S450–V947.

It belongs to the GlnE family. Requires Mg(2+) as cofactor.

It catalyses the reaction [glutamine synthetase]-O(4)-(5'-adenylyl)-L-tyrosine + phosphate = [glutamine synthetase]-L-tyrosine + ADP. It carries out the reaction [glutamine synthetase]-L-tyrosine + ATP = [glutamine synthetase]-O(4)-(5'-adenylyl)-L-tyrosine + diphosphate. In terms of biological role, involved in the regulation of glutamine synthetase GlnA, a key enzyme in the process to assimilate ammonia. When cellular nitrogen levels are high, the C-terminal adenylyl transferase (AT) inactivates GlnA by covalent transfer of an adenylyl group from ATP to specific tyrosine residue of GlnA, thus reducing its activity. Conversely, when nitrogen levels are low, the N-terminal adenylyl removase (AR) activates GlnA by removing the adenylyl group by phosphorolysis, increasing its activity. The regulatory region of GlnE binds the signal transduction protein PII (GlnB) which indicates the nitrogen status of the cell. In Salmonella heidelberg (strain SL476), this protein is Bifunctional glutamine synthetase adenylyltransferase/adenylyl-removing enzyme.